The following is a 580-amino-acid chain: Probable alpha-1,3-mannosyltransferase MNT4 (580 aa).

At 1 to 10 (MVLRIRRIKK) the chain is on the cytoplasmic side. A helical; Signal-anchor for type II membrane protein transmembrane segment spans residues 11–29 (LAPLIFTSLLSLIVLFRVY). Residues 30–580 (RQYPFSDHFE…KVVELWNKVV (551 aa)) are Lumenal-facing. N-linked (GlcNAc...) asparagine glycans are attached at residues Asn-132, Asn-167, Asn-223, and Asn-349.

This sequence belongs to the MNN1/MNT family.

Its subcellular location is the membrane. The polypeptide is Probable alpha-1,3-mannosyltransferase MNT4 (MNT4) (Saccharomyces cerevisiae (strain ATCC 204508 / S288c) (Baker's yeast)).